The following is a 1030-amino-acid chain: Leucine-rich repeat and coiled-coil domain-containing protein 1 (1030 aa).

6 LRR repeats span residues R7 to S28, N29 to C50, Y51 to A72, S73 to F94, N95 to H116, and K121 to T142. The LRRCT domain maps to N160–M200. The interval K298 to I401 is disordered. Positions E300–D311 are enriched in basic and acidic residues. Composition is skewed to polar residues over residues K338–Q368 and E378–Q393. Residues R432–L645 adopt a coiled-coil conformation.

Belongs to the LRRCC1 family.

It is found in the cytoplasm. Its subcellular location is the cytoskeleton. It localises to the microtubule organizing center. The protein resides in the centrosome. The protein localises to the centriole. Required for the organization of the mitotic spindle. Maintains the structural integrity of centrosomes during mitosis. The sequence is that of Leucine-rich repeat and coiled-coil domain-containing protein 1 (lrrcc1) from Xenopus laevis (African clawed frog).